A 294-amino-acid chain; its full sequence is tRNA dimethylallyltransferase (294 aa).

Residue 11–18 (GPTAVGKT) participates in ATP binding. 13–18 (TAVGKT) is a binding site for substrate. Residues 36–39 (DSQQ) form an interaction with substrate tRNA region.

Belongs to the IPP transferase family. As to quaternary structure, monomer. Mg(2+) is required as a cofactor.

The catalysed reaction is adenosine(37) in tRNA + dimethylallyl diphosphate = N(6)-dimethylallyladenosine(37) in tRNA + diphosphate. Its function is as follows. Catalyzes the transfer of a dimethylallyl group onto the adenine at position 37 in tRNAs that read codons beginning with uridine, leading to the formation of N6-(dimethylallyl)adenosine (i(6)A). This Lactococcus lactis subsp. lactis (strain IL1403) (Streptococcus lactis) protein is tRNA dimethylallyltransferase.